The sequence spans 362 residues: UDP-N-acetylglucosamine--N-acetylmuramyl-(pentapeptide) pyrophosphoryl-undecaprenol N-acetylglucosamine transferase (362 aa).

Residues 14-16, Arg170, Ser199, and Gln289 each bind UDP-N-acetyl-alpha-D-glucosamine; that span reads TGG.

Belongs to the glycosyltransferase 28 family. MurG subfamily.

The protein resides in the cell inner membrane. It catalyses the reaction di-trans,octa-cis-undecaprenyl diphospho-N-acetyl-alpha-D-muramoyl-L-alanyl-D-glutamyl-meso-2,6-diaminopimeloyl-D-alanyl-D-alanine + UDP-N-acetyl-alpha-D-glucosamine = di-trans,octa-cis-undecaprenyl diphospho-[N-acetyl-alpha-D-glucosaminyl-(1-&gt;4)]-N-acetyl-alpha-D-muramoyl-L-alanyl-D-glutamyl-meso-2,6-diaminopimeloyl-D-alanyl-D-alanine + UDP + H(+). It functions in the pathway cell wall biogenesis; peptidoglycan biosynthesis. Cell wall formation. Catalyzes the transfer of a GlcNAc subunit on undecaprenyl-pyrophosphoryl-MurNAc-pentapeptide (lipid intermediate I) to form undecaprenyl-pyrophosphoryl-MurNAc-(pentapeptide)GlcNAc (lipid intermediate II). In Borrelia hermsii (strain HS1 / DAH), this protein is UDP-N-acetylglucosamine--N-acetylmuramyl-(pentapeptide) pyrophosphoryl-undecaprenol N-acetylglucosamine transferase.